Here is a 350-residue protein sequence, read N- to C-terminus: Phenylalanine--tRNA ligase alpha subunit (350 aa).

Glu257 is a binding site for Mg(2+).

Belongs to the class-II aminoacyl-tRNA synthetase family. Phe-tRNA synthetase alpha subunit type 1 subfamily. In terms of assembly, tetramer of two alpha and two beta subunits. Requires Mg(2+) as cofactor.

The protein localises to the cytoplasm. It catalyses the reaction tRNA(Phe) + L-phenylalanine + ATP = L-phenylalanyl-tRNA(Phe) + AMP + diphosphate + H(+). This Listeria monocytogenes serotype 4a (strain HCC23) protein is Phenylalanine--tRNA ligase alpha subunit.